A 121-amino-acid chain; its full sequence is Small ribosomal subunit protein uS13 (121 aa).

The tract at residues 91-121 is disordered; the sequence is HRMSLPVRGQRTRTNARTRRGSRKTVAGRKK. Residues 100-121 are compositionally biased toward basic residues; sequence QRTRTNARTRRGSRKTVAGRKK.

The protein belongs to the universal ribosomal protein uS13 family. As to quaternary structure, part of the 30S ribosomal subunit. Forms a loose heterodimer with protein S19. Forms two bridges to the 50S subunit in the 70S ribosome.

Its function is as follows. Located at the top of the head of the 30S subunit, it contacts several helices of the 16S rRNA. In the 70S ribosome it contacts the 23S rRNA (bridge B1a) and protein L5 of the 50S subunit (bridge B1b), connecting the 2 subunits; these bridges are implicated in subunit movement. Contacts the tRNAs in the A and P-sites. This is Small ribosomal subunit protein uS13 from Prochlorococcus marinus (strain SARG / CCMP1375 / SS120).